A 421-amino-acid chain; its full sequence is 3-isopropylmalate dehydratase large subunit (421 aa).

Cysteine 300, cysteine 360, and cysteine 363 together coordinate [4Fe-4S] cluster.

This sequence belongs to the aconitase/IPM isomerase family. LeuC type 2 subfamily. As to quaternary structure, heterodimer of LeuC and LeuD. The cofactor is [4Fe-4S] cluster.

The enzyme catalyses (2R,3S)-3-isopropylmalate = (2S)-2-isopropylmalate. Its pathway is amino-acid biosynthesis; L-leucine biosynthesis; L-leucine from 3-methyl-2-oxobutanoate: step 2/4. Its function is as follows. Catalyzes the isomerization between 2-isopropylmalate and 3-isopropylmalate, via the formation of 2-isopropylmaleate. The sequence is that of 3-isopropylmalate dehydratase large subunit from Moorella thermoacetica (strain ATCC 39073 / JCM 9320).